The following is a 230-amino-acid chain: ATP synthase subunit a (230 aa).

Transmembrane regions (helical) follow at residues 17 to 37 (LPIT…FIMA), 78 to 98 (IFPF…IGVI), 107 to 127 (DLSV…WFGI), 165 to 187 (LFGN…GFLV), and 198 to 218 (EAII…AGGI).

This sequence belongs to the ATPase A chain family. In terms of assembly, F-type ATPases have 2 components, CF(1) - the catalytic core - and CF(0) - the membrane proton channel. CF(1) has five subunits: alpha(3), beta(3), gamma(1), delta(1), epsilon(1). CF(0) has three main subunits: a(1), b(2) and c(9-12). The alpha and beta chains form an alternating ring which encloses part of the gamma chain. CF(1) is attached to CF(0) by a central stalk formed by the gamma and epsilon chains, while a peripheral stalk is formed by the delta and b chains.

It localises to the cell inner membrane. Its function is as follows. Key component of the proton channel; it plays a direct role in the translocation of protons across the membrane. The protein is ATP synthase subunit a of Legionella pneumophila (strain Corby).